The primary structure comprises 474 residues: PTS system sucrose-specific EIIBC component (474 aa).

Residues 4–87 (SQIAQQVIDK…SKLLGIGDMT (84 aa)) form the PTS EIIB type-1 domain. Cys-26 functions as the Phosphocysteine intermediate; for EIIB activity in the catalytic mechanism. In terms of domain architecture, PTS EIIC type-1 spans 107 to 474 (KGLADIFVPI…LGKRAQLKAE (368 aa)). The next 10 membrane-spanning stretches (helical) occupy residues 109–129 (LADI…LMGI), 158–178 (FINT…GFSA), 182–202 (FGGN…PALS), 229–249 (VGYQ…ATLE), 264–284 (ITPL…IGPI), 303–323 (LGFV…ITGM), 345–365 (FIFP…LGAA), 376–396 (IAVP…MFGV), 403–423 (PFIS…LFNV), and 444–464 (LAMY…LTVI).

Its subcellular location is the cell inner membrane. The catalysed reaction is N(pros)-phospho-L-histidyl-[protein](out) + sucrose = sucrose 6(G)-phosphate(in) + L-histidyl-[protein]. The phosphoenolpyruvate-dependent sugar phosphotransferase system (sugar PTS), a major carbohydrate active transport system, catalyzes the phosphorylation of incoming sugar substrates concomitantly with their translocation across the cell membrane. This system is involved in sucrose transport. This is PTS system sucrose-specific EIIBC component (scrA) from Pasteurella multocida (strain Pm70).